We begin with the raw amino-acid sequence, 511 residues long: Glucans biosynthesis protein G (511 aa).

The first 22 residues, 1–22 (MMKMRWLSAAVMLTLYTSSSWA), serve as a signal peptide directing secretion.

This sequence belongs to the OpgD/OpgG family.

Its subcellular location is the periplasm. It functions in the pathway glycan metabolism; osmoregulated periplasmic glucan (OPG) biosynthesis. Involved in the biosynthesis of osmoregulated periplasmic glucans (OPGs). The sequence is that of Glucans biosynthesis protein G from Escherichia coli (strain K12 / MC4100 / BW2952).